The following is a 196-amino-acid chain: Auxin-induced protein 22B (196 aa).

Residues 18-22 (LRLGL) carry the EAR-like (transcriptional repression) motif. The disordered stretch occupies residues 44 to 74 (RQVRETSQDSVSISKASHHQQHVETVSAPPP). The PB1 domain maps to 99-186 (GIFVKVSMDG…SCKRLRIMKG (88 aa)).

Belongs to the Aux/IAA family. As to quaternary structure, homodimers and heterodimers.

It is found in the nucleus. Its function is as follows. Aux/IAA proteins are short-lived transcriptional factors that function as repressors of early auxin response genes at low auxin concentrations. Repression is thought to result from the interaction with auxin response factors (ARFs), proteins that bind to the auxin-responsive promoter element (AuxRE). Formation of heterodimers with ARF proteins may alter their ability to modulate early auxin response genes expression. The protein is Auxin-induced protein 22B (AUX22B) of Vigna radiata var. radiata (Mung bean).